The following is a 224-amino-acid chain: N-(5'-phosphoribosyl)anthranilate isomerase (224 aa).

The protein belongs to the TrpF family.

It carries out the reaction N-(5-phospho-beta-D-ribosyl)anthranilate = 1-(2-carboxyphenylamino)-1-deoxy-D-ribulose 5-phosphate. The protein operates within amino-acid biosynthesis; L-tryptophan biosynthesis; L-tryptophan from chorismate: step 3/5. This is N-(5'-phosphoribosyl)anthranilate isomerase from Sinorhizobium fredii (strain NBRC 101917 / NGR234).